Here is an 867-residue protein sequence, read N- to C-terminus: Glutamate receptor 1.2 (867 aa).

An N-terminal signal peptide occupies residues 1 to 27 (MVRICIQTPILLSFLLVLLFFISNCFA). Topologically, residues 28–560 (SSQNNDDDKR…SMWVFFQPLT (533 aa)) are extracellular. Residues Asn-301, Asn-400, Asn-496, and Asn-499 are each glycosylated (N-linked (GlcNAc...) asparagine). A helical membrane pass occupies residues 561–581 (PNLWITSAAFFVLTGIIVWLI). At 582 to 590 (ERAENKEFQ) the chain is on the cytoplasmic side. Residues 591–611 (GSWPQQIGVVIWFGFSTLVYA) form a helical membrane-spanning segment. Topologically, residues 612 to 622 (HREKLQHNLSR) are cytoplasmic. The chain crosses the membrane as a helical span at residues 623 to 643 (FVVTVWVFAVLILVTSYTATL). Residues 644-792 (TSMMTVQQIR…NPITLYRFRG (149 aa)) lie on the Extracellular side of the membrane. N-linked (GlcNAc...) asparagine glycans are attached at residues Asn-676, Asn-688, Asn-699, and Asn-748. The helical transmembrane segment at 793 to 813 (LFMITGVSFAFALAVLLILWL) threads the bilayer. Residues 814-867 (RERWEILVNSVNIYFSQRLRHFRILFTRTIHPSPLGLDNPIGENAVQMAQRNRR) lie on the Cytoplasmic side of the membrane.

It belongs to the glutamate-gated ion channel (TC 1.A.10.1) family. As to quaternary structure, may form heteromers. In terms of tissue distribution, expressed predominantly in roots and siliques.

It is found in the membrane. Glutamate-gated receptor that probably acts as a non-selective cation channel. May be involved in light-signal transduction and calcium homeostasis via the regulation of calcium influx into cells. The protein is Glutamate receptor 1.2 (GLR1.2) of Arabidopsis thaliana (Mouse-ear cress).